The sequence spans 20 residues: Superoxide dismutase [Fe] (20 aa).

This sequence belongs to the iron/manganese superoxide dismutase family. Homodimer. Fe cation serves as cofactor.

It is found in the periplasm. The catalysed reaction is 2 superoxide + 2 H(+) = H2O2 + O2. In terms of biological role, destroys superoxide anion radicals which are normally produced within the cells and which are toxic to biological systems. In Photobacterium damsela subsp. piscicida (Pasteurella piscicida), this protein is Superoxide dismutase [Fe] (sodB).